The chain runs to 189 residues: FUN14 domain-containing protein 2 (189 aa).

Over 1 to 80 (METSAPRAGS…GQESGPSAEK (80 aa)) the chain is Cytoplasmic. A phosphoserine mark is found at Ser10 and Ser53. The helical transmembrane segment at 81-101 (YSVATQLFIGGVTGWCTGFIF) threads the bilayer. Residues 102–107 (QKVGKL) lie on the Mitochondrial intermembrane side of the membrane. Residues 108 to 128 (AATAVGGGFFLLQLANHTGYI) traverse the membrane as a helical segment. At 129–164 (KVDWQRVEKDMKKAKEQLKIRKSNQIPTEVRSKAEE) the chain is on the cytoplasmic side. Ser151 is subject to Phosphoserine. The helical transmembrane segment at 165 to 185 (VVSFVKKNVLVTGGFFGGFLL) threads the bilayer. Residues 186–189 (GMAS) are Mitochondrial intermembrane-facing.

The protein belongs to the FUN14 family. In terms of tissue distribution, highly expressed in platelets (at protein level).

The protein localises to the mitochondrion outer membrane. It is found in the nucleus. Binds directly and specifically 1,2-Diacyl-sn-glycero-3-phospho-(1'-myo-inositol-3',4',5'-bisphosphate) (PIP3) leading to the recruitment of PIP3 to mitochondria and may play a role in the regulation of the platelet activation via AKT/GSK3B/cGMP signaling pathways. May act as transcription factor that regulates SREBP1 (isoform SREBP-1C) expression in order to modulate triglyceride (TG) homeostasis in hepatocytes. This Homo sapiens (Human) protein is FUN14 domain-containing protein 2.